The sequence spans 153 residues: MASLPKRIIKETEKLVSDPVPGITAEPHDDNLRYFQVTIEGPEQSPYEDGIFELELYLPDDYPMEAPKVRFLTKIYHPNIDRLGRICLDVLKTNWSPALQIRTVLLSIQALLASPNPNDPLANDVAEDWIKNEQGAKAKAREWTKLYAKKKPE.

Residues serine 3–lysine 149 enclose the UBC core domain. Cysteine 87 (glycyl thioester intermediate) is an active-site residue. A Glycyl lysine isopeptide (Lys-Gly) (interchain with G-Cter in ubiquitin) cross-link involves residue lysine 92.

The protein belongs to the ubiquitin-conjugating enzyme family. In terms of assembly, heterodimer with MMS2.

The catalysed reaction is S-ubiquitinyl-[E1 ubiquitin-activating enzyme]-L-cysteine + [E2 ubiquitin-conjugating enzyme]-L-cysteine = [E1 ubiquitin-activating enzyme]-L-cysteine + S-ubiquitinyl-[E2 ubiquitin-conjugating enzyme]-L-cysteine.. It functions in the pathway protein modification; protein ubiquitination. Its function is as follows. Has a role in the DNA error-free postreplication repair (PRR) pathway. The UBC13/MMS2 heterodimer catalyzes the synthesis of non-canonical poly-ubiquitin chains that are linked through 'Lys-63'. The chain is Ubiquitin-conjugating enzyme E2 13 (UBC13) from Saccharomyces cerevisiae (strain ATCC 204508 / S288c) (Baker's yeast).